The primary structure comprises 111 residues: MLISVLKSKISYATITQKELFYIGSITIDEAIMERAQLTINEQVQIVNLNNGERLETYVIPGKRNSNIIALNGPAARKGEIGDQLFILSYALIDPTQEKLDPVLVDLKLND.

Ser25 acts as the Schiff-base intermediate with substrate; via pyruvic acid in catalysis. The residue at position 25 (Ser25) is a Pyruvic acid (Ser). Residue Thr57 coordinates substrate. The active-site Proton donor is the Tyr58. 73–75 is a substrate binding site; sequence GPA.

Belongs to the PanD family. As to quaternary structure, heterooctamer of four alpha and four beta subunits. Pyruvate serves as cofactor. In terms of processing, is synthesized initially as an inactive proenzyme, which is activated by self-cleavage at a specific serine bond to produce a beta-subunit with a hydroxyl group at its C-terminus and an alpha-subunit with a pyruvoyl group at its N-terminus.

The protein resides in the cytoplasm. The enzyme catalyses L-aspartate + H(+) = beta-alanine + CO2. It functions in the pathway cofactor biosynthesis; (R)-pantothenate biosynthesis; beta-alanine from L-aspartate: step 1/1. Functionally, catalyzes the pyruvoyl-dependent decarboxylation of aspartate to produce beta-alanine. This is Aspartate 1-decarboxylase from Coxiella burnetii (strain RSA 493 / Nine Mile phase I).